The sequence spans 519 residues: Cytosol aminopeptidase (519 aa).

Ser42 bears the Phosphoserine mark. Position 45 is an N6-succinyllysine (Lys45). Phosphoserine is present on Ser54. N6-succinyllysine is present on residues Lys61 and Lys103. A phosphoserine mark is found at Ser180 and Ser194. 3 residues coordinate Zn(2+): Leu202, Met203, and Thr205. A Phosphoserine modification is found at Ser238. Zn(2+)-binding residues include Lys282 and Asp287. Residues Lys282, Asp287, Ser292, and Lys294 each contribute to the substrate site. Asp287 lines the Mg(2+) pocket. Residue Lys294 is part of the active site. Zn(2+) is bound by residues Arg303, Asp305, Asp364, and Glu366. 2 residues coordinate substrate: Asp305 and Asp364. Mg(2+)-binding residues include Asp364 and Glu366. The active site involves Arg368. At Lys455 the chain carries N6-acetyllysine; alternate. Lys455 is modified (N6-succinyllysine; alternate). Lys476 bears the N6-succinyllysine mark. Lys489 carries the N6-acetyllysine; alternate modification. Lys489 is modified (N6-succinyllysine; alternate).

It belongs to the peptidase M17 family. In terms of assembly, homohexamer. The cofactor is Zn(2+). Requires Mn(2+) as cofactor.

The protein localises to the cytoplasm. The catalysed reaction is Release of an N-terminal amino acid, Xaa-|-Yaa-, in which Xaa is preferably Leu, but may be other amino acids including Pro although not Arg or Lys, and Yaa may be Pro. Amino acid amides and methyl esters are also readily hydrolyzed, but rates on arylamides are exceedingly low.. It catalyses the reaction an S-substituted L-cysteinylglycine + H2O = an S-substituted L-cysteine + glycine. It carries out the reaction L-cysteinylglycine + H2O = L-cysteine + glycine. The enzyme catalyses S-benzyl-L-cysteinylglycine + H2O = S-benzyl-L-cysteine + glycine. The catalysed reaction is Release of N-terminal proline from a peptide.. Zofenoprilat inhibits Cys-Gly hydrolysis activity. In terms of biological role, cytosolic metallopeptidase that catalyzes the removal of unsubstituted N-terminal hydrophobic amino acids from various peptides. The presence of Zn(2+) ions is essential for the peptidase activity, and the association with other cofactors can modulate the substrate spectificity of the enzyme. For instance, in the presence of Mn(2+), it displays a specific Cys-Gly hydrolyzing activity of Cys-Gly-S-conjugates. Involved in the metabolism of glutathione and in the degradation of glutathione S-conjugates, which may play a role in the control of the cell redox status. The sequence is that of Cytosol aminopeptidase from Bos taurus (Bovine).